The sequence spans 110 residues: MTLLLQKCIRVELRKDPIFNASSSLEIFLSVLESVIYPFKGNLILLDFHLVDVQTTCYQRNSSMRNQLMSVFCQSLREFTLTALSCNSYCIIIVATRWQKIDNALKMTGR.

This is an uncharacterized protein from Saccharomyces cerevisiae (strain ATCC 204508 / S288c) (Baker's yeast).